We begin with the raw amino-acid sequence, 166 residues long: Small ribosomal subunit protein uS5 (166 aa).

An S5 DRBM domain is found at 11–74; the sequence is LQEKLIAVNR…EKARRNMINV (64 aa).

Belongs to the universal ribosomal protein uS5 family. As to quaternary structure, part of the 30S ribosomal subunit. Contacts proteins S4 and S8.

In terms of biological role, with S4 and S12 plays an important role in translational accuracy. Functionally, located at the back of the 30S subunit body where it stabilizes the conformation of the head with respect to the body. The sequence is that of Small ribosomal subunit protein uS5 from Mannheimia succiniciproducens (strain KCTC 0769BP / MBEL55E).